Here is a 225-residue protein sequence, read N- to C-terminus: Ribosomal RNA small subunit methyltransferase G (225 aa).

Residues glycine 69, alanine 119–glutamate 120, and arginine 136 contribute to the S-adenosyl-L-methionine site.

This sequence belongs to the methyltransferase superfamily. RNA methyltransferase RsmG family.

The protein resides in the cytoplasm. In terms of biological role, specifically methylates the N7 position of a guanine in 16S rRNA. The chain is Ribosomal RNA small subunit methyltransferase G from Pseudothermotoga lettingae (strain ATCC BAA-301 / DSM 14385 / NBRC 107922 / TMO) (Thermotoga lettingae).